An 84-amino-acid polypeptide reads, in one-letter code: Small, acid-soluble spore protein gamma-type (84 aa).

Polar residues-rich tracts occupy residues 1 to 25 (MANS…SAAG) and 34 to 44 (ASETNAQQVRK). The tract at residues 1 to 84 (MANSNNFSKT…SAEQNKQQNS (84 aa)) is disordered. 2 repeats span residues 21 to 47 (QSAA…KQNQ) and 48 to 74 (QSAG…QQNQ). 2 stretches are compositionally biased toward low complexity: residues 45-57 (QNQQ…GQFG) and 71-84 (QQNQ…QQNS).

This sequence belongs to the gamma-type SASP family.

Functionally, SASP are proteins degraded in the first minutes of spore germination and provide amino acids for both new protein synthesis and metabolism. These proteins may be involved in dormant spore's high resistance to UV light. This is Small, acid-soluble spore protein gamma-type (sspE) from Bacillus subtilis (strain 168).